The chain runs to 218 residues: Monomethylamine corrinoid protein 1 (218 aa).

Residues 1–91 form the B12-binding N-terminal domain; it reads MANQEIFDKL…ELEKTKVEGE (91 aa). The B12-binding domain maps to 94–218; sequence TGLAITFVAE…AAKVALNIMK (125 aa). Histidine 107 is a binding site for methylcob(III)alamin.

Belongs to the methylamine corrinoid protein family. As to quaternary structure, can form a complex with MtmB.

The protein operates within one-carbon metabolism; methanogenesis from methylamine. In terms of biological role, acts as a methyl group carrier between MtmB and MtbA. The polypeptide is Monomethylamine corrinoid protein 1 (mtmC1) (Methanosarcina acetivorans (strain ATCC 35395 / DSM 2834 / JCM 12185 / C2A)).